The sequence spans 64 residues: U-scoloptoxin(14)-Er1a (64 aa).

A signal peptide spans 1–23 (MRPSFPLLLIMLLVCTAHHMVSG).

Belongs to the scoloptoxin-14 family. In terms of processing, contains 4 disulfide bonds. Expressed by the venom gland.

It is found in the secreted. In Ethmostigmus rubripes (Giant centipede), this protein is U-scoloptoxin(14)-Er1a.